Reading from the N-terminus, the 390-residue chain is Succinate--CoA ligase [ADP-forming] subunit beta (390 aa).

The ATP-grasp domain occupies 9–248 (KDILRKFGVT…TSEEDPFEVE (240 aa)). Residues K50, 57 to 59 (GRG), E103, M106, and E111 each bind ATP. 2 residues coordinate Mg(2+): N203 and D217. Residues N268 and 325 to 327 (GIV) contribute to the substrate site.

The protein belongs to the succinate/malate CoA ligase beta subunit family. In terms of assembly, heterotetramer of two alpha and two beta subunits. Mg(2+) serves as cofactor.

It carries out the reaction succinate + ATP + CoA = succinyl-CoA + ADP + phosphate. The enzyme catalyses GTP + succinate + CoA = succinyl-CoA + GDP + phosphate. It participates in carbohydrate metabolism; tricarboxylic acid cycle; succinate from succinyl-CoA (ligase route): step 1/1. Functionally, succinyl-CoA synthetase functions in the citric acid cycle (TCA), coupling the hydrolysis of succinyl-CoA to the synthesis of either ATP or GTP and thus represents the only step of substrate-level phosphorylation in the TCA. The beta subunit provides nucleotide specificity of the enzyme and binds the substrate succinate, while the binding sites for coenzyme A and phosphate are found in the alpha subunit. The protein is Succinate--CoA ligase [ADP-forming] subunit beta of Chlorobium chlorochromatii (strain CaD3).